Reading from the N-terminus, the 247-residue chain is Probable transcriptional regulatory protein TDE_1487 (247 aa).

It belongs to the TACO1 family.

Its subcellular location is the cytoplasm. This Treponema denticola (strain ATCC 35405 / DSM 14222 / CIP 103919 / JCM 8153 / KCTC 15104) protein is Probable transcriptional regulatory protein TDE_1487.